A 254-amino-acid polypeptide reads, in one-letter code: Major prion protein (254 aa).

The signal sequence occupies residues 1 to 22 (MANLSYWLLALFVATWTDVGLC). Residues 23 to 231 (KKRPKPGGWN…SQAYYDGRRS (209 aa)) are interaction with GRB2, ERI3 and SYN1. The segment at 25-104 (RPKPGGWNTG…THNQWNKPSK (80 aa)) is disordered. 5 consecutive repeat copies span residues 51-59 (PQGGGTWGQ), 60-67 (PHGGGWGQ), 68-75 (PHGGGWGQ), 76-83 (PHGGGWGQ), and 84-91 (PHGGGWGQ). The segment at 51–91 (PQGGGTWGQPHGGGWGQPHGGGWGQPHGGGWGQPHGGGWGQ) is 5 X 8 AA tandem repeats of P-H-G-G-G-W-G-Q. Residues 52-95 (QGGGTWGQPHGGGWGQPHGGGWGQPHGGGWGQPHGGGWGQGGGT) show a composition bias toward gly residues. 12 residues coordinate Cu(2+): His61, Gly62, Gly63, His69, Gly70, Gly71, His77, Gly78, Gly79, His85, Gly86, and Gly87. Residues 90–231 (GQGGGTHNQW…SQAYYDGRRS (142 aa)) form a prP27-30 (protease resistant core) region. Cys179 and Cys214 are oxidised to a cystine. N-linked (GlcNAc...) asparagine glycans are attached at residues Asn181 and Asn197. A lipid anchor (GPI-anchor amidated serine) is attached at Ser231. A propeptide spans 232-254 (SAVLFSSPPVILLISFLIFLIVG) (removed in mature form).

The protein belongs to the prion family. Monomer and homodimer. Has a tendency to aggregate into amyloid fibrils containing a cross-beta spine, formed by a steric zipper of superposed beta-strands. Soluble oligomers may represent an intermediate stage on the path to fibril formation. Copper binding may promote oligomerization. Interacts with GRB2, APP, ERI3/PRNPIP and SYN1. Mislocalized cytosolically exposed PrP interacts with MGRN1; this interaction alters MGRN1 subcellular location and causes lysosomal enlargement. Interacts with KIAA1191.

The protein localises to the cell membrane. It is found in the golgi apparatus. Its function is as follows. Its primary physiological function is unclear. Has cytoprotective activity against internal or environmental stresses. May play a role in neuronal development and synaptic plasticity. May be required for neuronal myelin sheath maintenance. May play a role in iron uptake and iron homeostasis. Soluble oligomers are toxic to cultured neuroblastoma cells and induce apoptosis (in vitro). Association with GPC1 (via its heparan sulfate chains) targets PRNP to lipid rafts. Also provides Cu(2+) or Zn(2+) for the ascorbate-mediated GPC1 deaminase degradation of its heparan sulfate side chains. The protein is Major prion protein (PRNP) of Cricetulus griseus (Chinese hamster).